We begin with the raw amino-acid sequence, 31 residues long: Cytochrome b6-f complex subunit 6 (31 aa).

A helical membrane pass occupies residues 3–23; sequence TITSYFGFLLAALTITPALFI.

This sequence belongs to the PetL family. In terms of assembly, the 4 large subunits of the cytochrome b6-f complex are cytochrome b6, subunit IV (17 kDa polypeptide, PetD), cytochrome f and the Rieske protein, while the 4 small subunits are PetG, PetL, PetM and PetN. The complex functions as a dimer.

The protein resides in the plastid. Its subcellular location is the chloroplast thylakoid membrane. In terms of biological role, component of the cytochrome b6-f complex, which mediates electron transfer between photosystem II (PSII) and photosystem I (PSI), cyclic electron flow around PSI, and state transitions. PetL is important for photoautotrophic growth as well as for electron transfer efficiency and stability of the cytochrome b6-f complex. This chain is Cytochrome b6-f complex subunit 6, found in Zea mays (Maize).